The primary structure comprises 538 residues: (R)-citramalate synthase (538 aa).

Positions 3–268 (IKVYDTTLRD…IPKENLKKLF (266 aa)) constitute a Pyruvate carboxyltransferase domain.

This sequence belongs to the alpha-IPM synthase/homocitrate synthase family.

The enzyme catalyses pyruvate + acetyl-CoA + H2O = (3R)-citramalate + CoA + H(+). It participates in amino-acid biosynthesis; L-isoleucine biosynthesis; 2-oxobutanoate from pyruvate: step 1/3. Catalyzes the condensation of pyruvate and acetyl-coenzyme A to form (R)-citramalate. This chain is (R)-citramalate synthase, found in Thermotoga maritima (strain ATCC 43589 / DSM 3109 / JCM 10099 / NBRC 100826 / MSB8).